The chain runs to 746 residues: Taurocyamine kinase (746 aa).

Approximate repeat units follow at residues M31–V393 and M394–H705. A Phosphagen kinase N-terminal 1 domain is found at S35–K116. Positions L146 to L382 constitute a Phosphagen kinase C-terminal 1 domain. Residues S149–R153, H212, and R256 contribute to the ATP site. Residue C298 is part of the active site. ATP-binding positions include R307–H311 and R335–E340. The region spanning P398–G479 is the Phosphagen kinase N-terminal 2 domain. One can recognise a Phosphagen kinase C-terminal 2 domain in the interval F509–L746. ATP-binding positions include S512 to R516, H575, and R619. C661 is an active-site residue. Residues R670–L674 and R699–E704 contribute to the ATP site.

It belongs to the ATP:guanido phosphotransferase family. The cofactor is Mg(2+).

The enzyme catalyses taurocyamine + ATP = N-phosphotaurocyamine + ADP + H(+). In terms of biological role, this family of enzymes reversibly catalyzes the transfer of phosphate between ATP and various phosphogens (e.g. creatine phosphate). The polypeptide is Taurocyamine kinase (Schistosoma mansoni (Blood fluke)).